Here is a 228-residue protein sequence, read N- to C-terminus: Cytidylate kinase (228 aa).

11-19 lines the ATP pocket; that stretch reads GPASAGKST.

Belongs to the cytidylate kinase family. Type 1 subfamily.

It is found in the cytoplasm. It catalyses the reaction CMP + ATP = CDP + ADP. The catalysed reaction is dCMP + ATP = dCDP + ADP. This Limosilactobacillus reuteri (strain DSM 20016) (Lactobacillus reuteri) protein is Cytidylate kinase.